The sequence spans 502 residues: Mannitol 2-dehydrogenase (502 aa).

37–48 is an NAD(+) binding site; sequence IVHIGVGGFHRA.

Belongs to the mannitol dehydrogenase family. In terms of assembly, monomer.

It carries out the reaction D-mannitol + NAD(+) = D-fructose + NADH + H(+). Functionally, catalyzes the NAD(H)-dependent interconversion of D-fructose and D-mannitol in the mannitol metabolic pathway. In Emericella nidulans (strain FGSC A4 / ATCC 38163 / CBS 112.46 / NRRL 194 / M139) (Aspergillus nidulans), this protein is Mannitol 2-dehydrogenase.